We begin with the raw amino-acid sequence, 156 residues long: MNIIEGDFQNPGSARFAIVAARFNDFVVGHLVEGAADALRRHGVPDDHIDLIRVPGSFELPLAVQQTAEAGRYSAVIALGAVIRGGTPHFEYVASECTKGVAATMMDTGLPIAFGVLTVDTIEQAIERSGTKAGNKGAEAALSALEMVSLMKKLAE.

Residues F23, 57 to 59 (SFE), and 81 to 83 (AVI) contribute to the 5-amino-6-(D-ribitylamino)uracil site. Residue 86–87 (GT) coordinates (2S)-2-hydroxy-3-oxobutyl phosphate. Catalysis depends on H89, which acts as the Proton donor. F114 provides a ligand contact to 5-amino-6-(D-ribitylamino)uracil. Residue R128 participates in (2S)-2-hydroxy-3-oxobutyl phosphate binding.

Belongs to the DMRL synthase family. In terms of assembly, forms an icosahedral capsid composed of 60 subunits, arranged as a dodecamer of pentamers.

It carries out the reaction (2S)-2-hydroxy-3-oxobutyl phosphate + 5-amino-6-(D-ribitylamino)uracil = 6,7-dimethyl-8-(1-D-ribityl)lumazine + phosphate + 2 H2O + H(+). It participates in cofactor biosynthesis; riboflavin biosynthesis; riboflavin from 2-hydroxy-3-oxobutyl phosphate and 5-amino-6-(D-ribitylamino)uracil: step 1/2. In terms of biological role, catalyzes the formation of 6,7-dimethyl-8-ribityllumazine by condensation of 5-amino-6-(D-ribitylamino)uracil with 3,4-dihydroxy-2-butanone 4-phosphate. This is the penultimate step in the biosynthesis of riboflavin. The polypeptide is 6,7-dimethyl-8-ribityllumazine synthase (Alkalilimnicola ehrlichii (strain ATCC BAA-1101 / DSM 17681 / MLHE-1)).